Here is a 681-residue protein sequence, read N- to C-terminus: Serine/threonine-protein kinase PAK 6 (681 aa).

3 disordered regions span residues 1–30 (MFRKKKKKRPEISAPQNFQHRVHTSFDPKE), 200–256 (QSSP…ESSL), and 268–355 (TAAT…PRTW). One can recognise a CRIB domain in the interval 12–25 (ISAPQNFQHRVHTS). A linker region spans residues 26–406 (FDPKEGKFVG…VVDQGDPRLL (381 aa)). 2 stretches are compositionally biased toward low complexity: residues 201-212 (SSPPGASPPTGT) and 268-278 (TAATAPPSSSK). Over residues 308-333 (SLPSDQPVGTFSPLTTSDTSSPQKSL) the composition is skewed to polar residues. Positions 407–658 (LDSYVKIGEG…AQELLDHPFL (252 aa)) constitute a Protein kinase domain. ATP-binding positions include 413 to 421 (IGEGSTGIV) and lysine 436. Aspartate 526 serves as the catalytic Proton acceptor. Serine 560 is subject to Phosphoserine; by autocatalysis.

It belongs to the protein kinase superfamily. STE Ser/Thr protein kinase family. STE20 subfamily. As to quaternary structure, interacts tightly with GTP-bound but not GDP-bound CDC42/p21 and RAC1. Interacts with the androgen receptor AR. Interacts with IQGAP1 and PPM1B. Autophosphorylated. Phosphorylated by MAP2K6/MAPKK6, leading to PAK6 activation.

It is found in the cytoplasm. The protein localises to the nucleus. It carries out the reaction L-seryl-[protein] + ATP = O-phospho-L-seryl-[protein] + ADP + H(+). It catalyses the reaction L-threonyl-[protein] + ATP = O-phospho-L-threonyl-[protein] + ADP + H(+). Functionally, serine/threonine protein kinase that plays a role in the regulation of gene transcription. The kinase activity is induced by various effectors including AR or MAP2K6/MAPKK6. Phosphorylates the DNA-binding domain of androgen receptor/AR and thereby inhibits AR-mediated transcription. Also inhibits ESR1-mediated transcription. May play a role in cytoskeleton regulation by interacting with IQGAP1. May protect cells from apoptosis through phosphorylation of BAD. The polypeptide is Serine/threonine-protein kinase PAK 6 (PAK6) (Pongo abelii (Sumatran orangutan)).